The primary structure comprises 300 residues: UDP-N-acetylenolpyruvoylglucosamine reductase (300 aa).

The 165-residue stretch at 30 to 194 (KVGGPADFFA…LAAVFSLAAG (165 aa)) folds into the FAD-binding PCMH-type domain. The active site involves arginine 174. The active-site Proton donor is serine 223. Residue glutamate 293 is part of the active site.

It belongs to the MurB family. FAD serves as cofactor.

The protein localises to the cytoplasm. The enzyme catalyses UDP-N-acetyl-alpha-D-muramate + NADP(+) = UDP-N-acetyl-3-O-(1-carboxyvinyl)-alpha-D-glucosamine + NADPH + H(+). Its pathway is cell wall biogenesis; peptidoglycan biosynthesis. Its function is as follows. Cell wall formation. This is UDP-N-acetylenolpyruvoylglucosamine reductase from Geotalea uraniireducens (strain Rf4) (Geobacter uraniireducens).